A 142-amino-acid chain; its full sequence is Large ribosomal subunit protein uL11 (142 aa).

The protein belongs to the universal ribosomal protein uL11 family. As to quaternary structure, part of the ribosomal stalk of the 50S ribosomal subunit. Interacts with L10 and the large rRNA to form the base of the stalk. L10 forms an elongated spine to which L12 dimers bind in a sequential fashion forming a multimeric L10(L12)X complex. One or more lysine residues are methylated.

In terms of biological role, forms part of the ribosomal stalk which helps the ribosome interact with GTP-bound translation factors. The sequence is that of Large ribosomal subunit protein uL11 from Baumannia cicadellinicola subsp. Homalodisca coagulata.